A 271-amino-acid chain; its full sequence is Formamidopyrimidine-DNA glycosylase (271 aa).

Residue proline 2 is the Schiff-base intermediate with DNA of the active site. Residue glutamate 3 is the Proton donor of the active site. Lysine 56 (proton donor; for beta-elimination activity) is an active-site residue. Residues histidine 89, arginine 107, and lysine 151 each contribute to the DNA site. The FPG-type zinc-finger motif lies at 236–270; sequence NVYGRAGLPCRQCGTPVRLLRQGQRSTYFCPHCQR. Catalysis depends on arginine 260, which acts as the Proton donor; for delta-elimination activity.

It belongs to the FPG family. As to quaternary structure, monomer. Zn(2+) is required as a cofactor.

It catalyses the reaction Hydrolysis of DNA containing ring-opened 7-methylguanine residues, releasing 2,6-diamino-4-hydroxy-5-(N-methyl)formamidopyrimidine.. The catalysed reaction is 2'-deoxyribonucleotide-(2'-deoxyribose 5'-phosphate)-2'-deoxyribonucleotide-DNA = a 3'-end 2'-deoxyribonucleotide-(2,3-dehydro-2,3-deoxyribose 5'-phosphate)-DNA + a 5'-end 5'-phospho-2'-deoxyribonucleoside-DNA + H(+). Involved in base excision repair of DNA damaged by oxidation or by mutagenic agents. Acts as a DNA glycosylase that recognizes and removes damaged bases. Has a preference for oxidized purines, such as 7,8-dihydro-8-oxoguanine (8-oxoG). Has AP (apurinic/apyrimidinic) lyase activity and introduces nicks in the DNA strand. Cleaves the DNA backbone by beta-delta elimination to generate a single-strand break at the site of the removed base with both 3'- and 5'-phosphates. The chain is Formamidopyrimidine-DNA glycosylase from Acidovorax sp. (strain JS42).